The following is a 176-amino-acid chain: Large ribosomal subunit protein uL10 (176 aa).

This sequence belongs to the universal ribosomal protein uL10 family. Part of the ribosomal stalk of the 50S ribosomal subunit. The N-terminus interacts with L11 and the large rRNA to form the base of the stalk. The C-terminus forms an elongated spine to which L12 dimers bind in a sequential fashion forming a multimeric L10(L12)X complex.

Its function is as follows. Forms part of the ribosomal stalk, playing a central role in the interaction of the ribosome with GTP-bound translation factors. This is Large ribosomal subunit protein uL10 from Carboxydothermus hydrogenoformans (strain ATCC BAA-161 / DSM 6008 / Z-2901).